A 396-amino-acid chain; its full sequence is MLRRLLERPCTLALLVGSQLAVMMYLSLGGFRSLSALFGREQEPAFDYSHPHDVYSNLSHMPGAPVAPGGLPAPQGLPYCPKRSPLLVGPISVSFSPVPSLAEIVERNPRVEPGGRYRPARCEPRSRTAIIVPHRAREHHLRLLLYHLHPFLQRQQLAYGIYVIHQAGNGTFNRAKLLNVGVREALRDEEWDCLFLHDVDLLPENDHNLYVCDPRGPRHVAVAMNKFGYSLPYPQYFGGVSALTPDQYLKMNGFPNEYWGWGGEDDDIATRVRLAGMKISRPPTSVGHYKMVKHRGDKGNEENPHRFDLLVRTQNSWTQDGMNSLTYQLLSRELGPLYTNITADIGTDPRGPRTSSGPHYPPGSSQAFRQEMLQRRPPARPGPLPTANHTAPHGSH.

Topologically, residues 1-10 (MLRRLLERPC) are cytoplasmic. A helical; Signal-anchor for type II membrane protein transmembrane segment spans residues 11–31 (TLALLVGSQLAVMMYLSLGGF). The Lumenal segment spans residues 32–396 (RSLSALFGRE…ANHTAPHGSH (365 aa)). Residue Asn57 is glycosylated (N-linked (GlcNAc...) asparagine). Cys80 and Cys122 are oxidised to a cystine. Residue 133–137 (PHRAR) coordinates UDP-alpha-D-galactose. The N-linked (GlcNAc...) asparagine glycan is linked to Asn169. Residues 172–174 (FNR), 199–200 (VD), Tyr229, and Trp261 contribute to the UDP-alpha-D-galactose site. Cys193 and Cys212 are disulfide-bonded. Asp200 is a binding site for Mn(2+). 263–266 (GEDD) serves as a coordination point for N-acetyl-D-glucosamine. His294 contacts Mn(2+). Residue 294–296 (HRG) coordinates UDP-alpha-D-galactose. Arg306 is a binding site for N-acetyl-D-glucosamine. An N-linked (GlcNAc...) asparagine glycan is attached at Asn340. Residues 341–396 (ITADIGTDPRGPRTSSGPHYPPGSSQAFRQEMLQRRPPARPGPLPTANHTAPHGSH) are disordered. Residues 353 to 368 (RTSSGPHYPPGSSQAF) show a composition bias toward polar residues. Residue Asn388 is glycosylated (N-linked (GlcNAc...) asparagine).

The protein belongs to the glycosyltransferase 7 family. It depends on Mn(2+) as a cofactor.

Its subcellular location is the golgi apparatus. The protein resides in the golgi stack membrane. The enzyme catalyses an N-acetyl-beta-D-glucosaminyl derivative + UDP-alpha-D-galactose = a beta-D-galactosyl-(1-&gt;4)-N-acetyl-beta-D-glucosaminyl derivative + UDP + H(+). It carries out the reaction N-acetyl-D-glucosamine + UDP-alpha-D-galactose = beta-D-galactosyl-(1-&gt;4)-N-acetyl-D-glucosamine + UDP + H(+). The catalysed reaction is a beta-D-GlcNAc-(1-&gt;3)-beta-D-Gal-(1-&gt;4)-beta-D-Glc-(1&lt;-&gt;1)-Cer(d18:1(4E)) + UDP-alpha-D-galactose = a neolactoside nLc4Cer(d18:1(4E)) + UDP + H(+). It catalyses the reaction a beta-D-glucosylceramide + UDP-alpha-D-galactose = a beta-D-galactosyl-(1-&gt;4)-beta-D-glucosyl-(1&lt;-&gt;1)-ceramide + UDP + H(+). The enzyme catalyses a neolactoside IV(3)-beta-GlcNAc-nLc4Cer + UDP-alpha-D-galactose = a neolactoside nLc6Cer + UDP + H(+). It functions in the pathway protein modification; protein glycosylation. In terms of biological role, responsible for the synthesis of complex-type N-linked oligosaccharides in many glycoproteins as well as the carbohydrate moieties of glycolipids. This Bos taurus (Bovine) protein is Beta-1,4-galactosyltransferase 3 (B4GALT3).